A 452-amino-acid polypeptide reads, in one-letter code: UDP-N-acetylmuramate--L-alanine ligase (452 aa).

121 to 127 (GTHGKTT) lines the ATP pocket.

It belongs to the MurCDEF family.

The protein resides in the cytoplasm. It catalyses the reaction UDP-N-acetyl-alpha-D-muramate + L-alanine + ATP = UDP-N-acetyl-alpha-D-muramoyl-L-alanine + ADP + phosphate + H(+). Its pathway is cell wall biogenesis; peptidoglycan biosynthesis. Cell wall formation. The polypeptide is UDP-N-acetylmuramate--L-alanine ligase (Christiangramia forsetii (strain DSM 17595 / CGMCC 1.15422 / KT0803) (Gramella forsetii)).